A 249-amino-acid chain; its full sequence is tRNA pseudouridine synthase A (249 aa).

Aspartate 52 functions as the Nucleophile in the catalytic mechanism. Tyrosine 110 is a binding site for substrate.

This sequence belongs to the tRNA pseudouridine synthase TruA family. In terms of assembly, homodimer.

It carries out the reaction uridine(38/39/40) in tRNA = pseudouridine(38/39/40) in tRNA. In terms of biological role, formation of pseudouridine at positions 38, 39 and 40 in the anticodon stem and loop of transfer RNAs. This Exiguobacterium sibiricum (strain DSM 17290 / CCUG 55495 / CIP 109462 / JCM 13490 / 255-15) protein is tRNA pseudouridine synthase A.